Consider the following 444-residue polypeptide: E3 ubiquitin-protein ligase APD2 (444 aa).

Residues 1-15 are compositionally biased toward low complexity; that stretch reads MSLPDSLPSSSSSPP. The interval 1 to 41 is disordered; sequence MSLPDSLPSSSSSPPVTREETGFHRFEHHGNDSGFDHRDRP. Over residues 17–41 the composition is skewed to basic and acidic residues; the sequence is TREETGFHRFEHHGNDSGFDHRDRP. The next 2 membrane-spanning stretches (helical) occupy residues 74-94 and 312-332; these read VVVV…GLYG and IAYI…SSLF. The RING-type zinc finger occupies 393–432; it reads CAICYDAPRDCFFLSCGHCVACFQCGTRIAETSGFCPVCR.

In terms of assembly, interacts with At1g78040, At1g10650, VHA-c4/AVAP4, VHA-c''2/VMA16 and TUFA. As to expression, expressed in the shoot apical meristems (SAM), root tips, pollen and inflorescences.

The protein localises to the endomembrane system. It catalyses the reaction S-ubiquitinyl-[E2 ubiquitin-conjugating enzyme]-L-cysteine + [acceptor protein]-L-lysine = [E2 ubiquitin-conjugating enzyme]-L-cysteine + N(6)-ubiquitinyl-[acceptor protein]-L-lysine.. Its pathway is protein modification; protein ubiquitination. Exhibits E2-dependent E3 ligase activity. Involved in pollen mitosis II (PMII) regulation during male gametogenesis. This is E3 ubiquitin-protein ligase APD2 from Arabidopsis thaliana (Mouse-ear cress).